Consider the following 212-residue polypeptide: Pyridoxine/pyridoxamine 5'-phosphate oxidase (212 aa).

Residues 61–66, 76–77, lysine 83, and glutamine 105 contribute to the FMN site; these read RSVLLK and YT. Residue lysine 66 coordinates substrate. Residues tyrosine 123, arginine 127, and serine 131 each coordinate substrate. Residues 140–141 and tryptophan 185 each bind FMN; that span reads QS. 191–193 serves as a coordination point for substrate; that stretch reads RLH. Position 195 (arginine 195) interacts with FMN.

The protein belongs to the pyridoxamine 5'-phosphate oxidase family. As to quaternary structure, homodimer. Requires FMN as cofactor.

It carries out the reaction pyridoxamine 5'-phosphate + O2 + H2O = pyridoxal 5'-phosphate + H2O2 + NH4(+). It catalyses the reaction pyridoxine 5'-phosphate + O2 = pyridoxal 5'-phosphate + H2O2. Its pathway is cofactor metabolism; pyridoxal 5'-phosphate salvage; pyridoxal 5'-phosphate from pyridoxamine 5'-phosphate: step 1/1. It functions in the pathway cofactor metabolism; pyridoxal 5'-phosphate salvage; pyridoxal 5'-phosphate from pyridoxine 5'-phosphate: step 1/1. Functionally, catalyzes the oxidation of either pyridoxine 5'-phosphate (PNP) or pyridoxamine 5'-phosphate (PMP) into pyridoxal 5'-phosphate (PLP). The polypeptide is Pyridoxine/pyridoxamine 5'-phosphate oxidase (Dichelobacter nodosus (strain VCS1703A)).